Consider the following 296-residue polypeptide: Ribonuclease H2 subunit A (296 aa).

The region spanning 14-236 (PCLMGIDEAG…CTTHLKGEVE (223 aa)) is the RNase H type-2 domain. A divalent metal cation-binding residues include aspartate 20, glutamate 21, and aspartate 127.

The protein belongs to the RNase HII family. Eukaryotic subfamily. Mn(2+) is required as a cofactor. It depends on Mg(2+) as a cofactor.

It catalyses the reaction Endonucleolytic cleavage to 5'-phosphomonoester.. In terms of biological role, catalytic subunit of RNase HII, an endonuclease that specifically degrades the RNA of RNA:DNA hybrids. Participates in DNA replication, possibly by mediating the removal of lagging-strand Okazaki fragment RNA primers during DNA replication. Mediates the excision of single ribonucleotides from DNA:RNA duplexes. The sequence is that of Ribonuclease H2 subunit A from Arabidopsis thaliana (Mouse-ear cress).